The chain runs to 76 residues: Attractin (76 aa).

Positions 1-18 (MKVAIIILSLALVAAVFA) are cleaved as a signal peptide. 3 cysteine pairs are disulfide-bonded: C22–C59, C31–C51, and C38–C44. The N-linked (GlcNAc...) asparagine glycan is linked to N26.

Binds to temptin and enticin. Produced by the albumen gland of the egg cordons.

Its subcellular location is the secreted. Its function is as follows. Water-borne pheromone that attract the marine mollusk Aplysia into breeding aggregations and coordinate male and female reproductive behavior within the aggregation. This is Attractin (ATT) from Aplysia californica (California sea hare).